The chain runs to 395 residues: Acetylornithine aminotransferase (395 aa).

Residues 117 to 118 (GA) and phenylalanine 144 each bind pyridoxal 5'-phosphate. Arginine 147 provides a ligand contact to N(2)-acetyl-L-ornithine. Residue 230-233 (DEVQ) coordinates pyridoxal 5'-phosphate. Lysine 259 carries the post-translational modification N6-(pyridoxal phosphate)lysine. A N(2)-acetyl-L-ornithine-binding site is contributed by serine 285. Residue threonine 286 participates in pyridoxal 5'-phosphate binding.

It belongs to the class-III pyridoxal-phosphate-dependent aminotransferase family. ArgD subfamily. As to quaternary structure, homodimer. Pyridoxal 5'-phosphate serves as cofactor.

It is found in the cytoplasm. The catalysed reaction is N(2)-acetyl-L-ornithine + 2-oxoglutarate = N-acetyl-L-glutamate 5-semialdehyde + L-glutamate. It functions in the pathway amino-acid biosynthesis; L-arginine biosynthesis; N(2)-acetyl-L-ornithine from L-glutamate: step 4/4. This is Acetylornithine aminotransferase from Methanosarcina acetivorans (strain ATCC 35395 / DSM 2834 / JCM 12185 / C2A).